A 1113-amino-acid chain; its full sequence is MNEEFEGDVPMSDPFLSLVTKLDDIAPFPNNDPLDFDMEHNWQEPGPSQQPDPSIPGNQHSPPQEYYDIDGQRDVSTLHSLLNHNNDDFFSMRFSPPNFDLGGGRGPSLAATQQLSGEGPASMLNPLQTSPPSGGYPPADAYRPLSLAQQLAAPAMTPHQAASLFVNTNGIDQKNFTHAMLSPPHHTSMTPQPYTEAMEHINGYMSPYDQAQGPSGPSYYSQHHQSPPPHHHHHHPMPKIHENPEQVASPSIEDAPETKPTHLVEPQSPKSPQNMKEELLRLLVNMSPSEVERLKNKKSGACSATNGPSRSKEKAAKIVIQETAEGDEDEDDEDSDSGETMSQGTTIIVRRPKTERRTAHNLIEKKYRCSINDRIQQLKVLLCGDEAKLSKSATLRRAIEHIEEVEHENQVLKHHVEQMRKTLQNNRLPYPEPIQYTEYSARSPVESSPSPPRNERKRSRMSTTTPMKNGTRDGSSKVTLFAMLLAVLIFNPIGLLAGSAIFSKAAAEAPIASPFEHGRVIDDPDGTSTRTLFWEGSIINMSYVWVFNILMIIYVVVKLLIHGDPVQDFMSVSWQTFVTTREKARAELNSGNLKDAQRKFCECLATLDRSLPSPGVDSVFSVGWECVRHLLNWLWIGRYIARRRRSTTKPVSVVCRSHAQTAVLYHEIHQLHLMGITGNFEDTYEPSALTGLFMSLCAVNLAEAAGASNDGLPRAVMAQIYISASIQCRLALPNLLAPFFSGYFLRRARRHVRRAPEHSVSHLLWIFHPATRKFMSDAKRLEHVLSSKQKQLRFGSFVEDEQLSPLARIRTTLKVYLLSKLVQELVGGDEIFTKNVERILNDNDRLDDEVDVVDVSRLLVTISTQCAAILTNEKDESAKFGTWISRNGDACCTWWTHVLTCGIYWRSNKNELARQHYSLIRNCPPKILTDNLGLAVGHALCARKICIDDRDSPKVSQYVCIHTKKSLESLRLFSTSSRASGVVSGIQEGTRRMAYEWIMNSLLDAWRSNLFASKPYWTQSFKGQSTFSTLYQEAYNHYAIINGTRGDCWRLFVYELTCRMLNGANPQATWSGVRRVRSTKMDAVRGRVSMRRSAQPDAFHLHTLVKLHTSMDL.

Residues 1–52 (MNEEFEGDVPMSDPFLSLVTKLDDIAPFPNNDPLDFDMEHNWQEPGPSQQPD) are transcriptional activation (acidic). 4 disordered regions span residues 24–68 (DIAP…EYYD), 101–132 (LGGG…TSPP), 206–274 (SPYD…SPQN), and 290–345 (EVER…SQGT). Basic residues predominate over residues 229 to 238 (PHHHHHHPMP). Residues 324-337 (AEGDEDEDDEDSDS) are compositionally biased toward acidic residues. Residues 355-368 (ERRTAHNLIEKKYR) are basic motif. Residues 355 to 405 (ERRTAHNLIEKKYRCSINDRIQQLKVLLCGDEAKLSKSATLRRAIEHIEEV) enclose the bHLH domain. A helix-loop-helix motif region spans residues 369-405 (CSINDRIQQLKVLLCGDEAKLSKSATLRRAIEHIEEV). Residues 395-422 (LRRAIEHIEEVEHENQVLKHHVEQMRKT) are a coiled coil. A disordered region spans residues 437-472 (TEYSARSPVESSPSPPRNERKRSRMSTTTPMKNGTR). Transmembrane regions (helical) follow at residues 478–498 (VTLF…LLAG) and 541–561 (MSYV…KLLI).

In terms of processing, processed in the Golgi apparatus, releasing the protein from the membrane. Post-translationally, ubiquitinated; the nuclear form has a rapid turnover and is rapidly ubiquitinated and degraded by the proteasome in the nucleus. As to expression, broadly expressed, including many cells in the head. Expressed in the intestine.

The protein resides in the nucleus. It is found in the endoplasmic reticulum membrane. Transcription factor involved in maintaining normal fat levels. Regulates the expression of genes involved in lipid metabolism in response to nutrient availability, such as the fatty-acid desaturases fat-5, fat-6 and fat-7. In response to a high-glucose diet, promotes fatty acid synthesis, elongation and desaturation, acting in concert with transcription factor mxl-3. Plays a role in synthesis of monomethyl branched-chain fatty acids (mmBCFAs) as well as other very-long-chain fatty acids. Downstream of the cis-Golgi membrane protein eas-1/GOLT1B and the E3 ubiquitin ligase rnf-145/RNF145, plays a role in the regulation of glial size, perhaps by modulating synthesis of long-chain polyunsaturated fatty-acids (LC-PUFA). Modulates expression of genes in the one-carbon cycle, which produces the methyl donor S-adenosylmethionine (SAM). Probably involved in a feedback loop in which decreased levels of SAM lead to increased transcriptional activity of sbp-1, thereby causing lipid accumulation. Involved in the negative regulation of zinc homeostasis. Involved in the response to simulated microgravity, in concert with Mediator complex subunit mdt-15, probably acting in the intestine. Plays a role in transgenerational lipid accumulation in response to a high-fat diet, probably acting by upregulating wdr-5.1 expression to increase the level of trimethylated 'Lys-4' histone H3 (H3K4me3), which may then induce the expression of fat-5, fat-6 and fat-7. May act as an oxygen sensor for lipid metabolism. Its function is as follows. Precursor of the transcription factor form, which is embedded in the endoplasmic reticulum membrane. Processing of this form allows release of the transcription factor form that translocates into the nucleus and activates transcription of genes involved in sterol biosynthesis and lipid homeostasis. In terms of biological role, key transcription factor that regulates expression of genes involved in sterol biosynthesis and lipid homeostasis. This Caenorhabditis elegans protein is Sterol regulatory element binding protein sbp-1.